Here is a 237-residue protein sequence, read N- to C-terminus: MKITWLGHAAFRVETAKAVILIDPFLNGNPGAKGIDFKGATRGVTHIALTHGHGDHVGDTVAIAREHGATVIANADLASWLGSQGVEKLDPGNTGGTLAHEGFTITFVNALHSSAMLTENGVSQALGNPNGLVFHFEDSPTLYHMGDTDIFSDMALINELHQPEIGIVPIGDRFTMGGAVAALACQRYFNFNSVLPCHYASFPIIDRTADKFIAGMADHPATKVLADPAGTVHSFQA.

Belongs to the UPF0173 family.

This Brucella canis (strain ATCC 23365 / NCTC 10854 / RM-666) protein is UPF0173 metal-dependent hydrolase BCAN_B0597.